The following is a 202-amino-acid chain: Na(+)-translocating NADH-quinone reductase subunit E (202 aa).

The next 6 helical transmembrane spans lie at 11-31, 35-55, 81-101, 114-134, 144-164, and 180-200; these read SVFI…FIAI, VETA…TVPA, FLGF…LEML, GIYL…LFMV, VVYG…LAGI, and LGIA…FSGI.

This sequence belongs to the NqrDE/RnfAE family. As to quaternary structure, composed of six subunits; NqrA, NqrB, NqrC, NqrD, NqrE and NqrF.

It localises to the cell inner membrane. The enzyme catalyses a ubiquinone + n Na(+)(in) + NADH + H(+) = a ubiquinol + n Na(+)(out) + NAD(+). NQR complex catalyzes the reduction of ubiquinone-1 to ubiquinol by two successive reactions, coupled with the transport of Na(+) ions from the cytoplasm to the periplasm. NqrA to NqrE are probably involved in the second step, the conversion of ubisemiquinone to ubiquinol. The chain is Na(+)-translocating NADH-quinone reductase subunit E from Azotobacter vinelandii (strain DJ / ATCC BAA-1303).